Reading from the N-terminus, the 357-residue chain is DNA replication and repair protein RecF (357 aa).

30 to 37 (GANGSGKT) lines the ATP pocket.

It belongs to the RecF family.

The protein localises to the cytoplasm. The RecF protein is involved in DNA metabolism; it is required for DNA replication and normal SOS inducibility. RecF binds preferentially to single-stranded, linear DNA. It also seems to bind ATP. The chain is DNA replication and repair protein RecF from Shigella boydii serotype 4 (strain Sb227).